Reading from the N-terminus, the 136-residue chain is Small ribosomal subunit protein uS8c (136 aa).

This sequence belongs to the universal ribosomal protein uS8 family. In terms of assembly, part of the 30S ribosomal subunit.

It localises to the plastid. Its subcellular location is the chloroplast. One of the primary rRNA binding proteins, it binds directly to 16S rRNA central domain where it helps coordinate assembly of the platform of the 30S subunit. This Morus indica (Mulberry) protein is Small ribosomal subunit protein uS8c (rps8).